Reading from the N-terminus, the 323-residue chain is AA9 family lytic polysaccharide monooxygenase B (323 aa).

The signal sequence occupies residues 1-18; the sequence is MKSFTLTTLAALAGNAAA. Cu(2+) is bound by residues histidine 19 and histidine 97. A disulfide bridge connects residues cysteine 56 and cysteine 191. Residues histidine 177 and glutamine 186 each contribute to the O2 site. A Cu(2+)-binding site is contributed by tyrosine 188. The 38-residue stretch at 286–323 folds into the CBM1 domain; that stretch reads CTVQKYQQCGGQGYTGCTNCASGSTCSAVSPPYYSQCV.

This sequence belongs to the polysaccharide monooxygenase AA9 family. It depends on Cu(2+) as a cofactor.

It is found in the secreted. The catalysed reaction is [(1-&gt;4)-beta-D-glucosyl]n+m + reduced acceptor + O2 = 4-dehydro-beta-D-glucosyl-[(1-&gt;4)-beta-D-glucosyl]n-1 + [(1-&gt;4)-beta-D-glucosyl]m + acceptor + H2O.. Its activity is regulated as follows. Is able to utilize various natural phenolic compounds as reducing agents. Most of these reducing agents are present in plants, either free or as lignin building blocks, such as sinapic acid, or as flavonoids such as catechin and dopamine. Phenolic compounds with 1,2-benzenediol and 1,2,3-benzenetriol moieties yield the highest release of oxidized and non-oxidized glucooligosaccharides from cellulose compared to monophenols or sulfur-containing compounds. In terms of biological role, lytic polysaccharide monooxygenase (LPMO) that depolymerizes crystalline and amorphous polysaccharides via the oxidation of scissile alpha- or beta-(1-4)-glycosidic bonds, yielding C1 oxidation products. Catalysis by LPMOs requires the reduction of the active-site copper from Cu(II) to Cu(I) by a reducing agent and H(2)O(2) or O(2) as a cosubstrate. Is active on regenerated amorphous cellulose (RAC). The protein is AA9 family lytic polysaccharide monooxygenase B of Thermothelomyces thermophilus (strain ATCC 42464 / BCRC 31852 / DSM 1799) (Sporotrichum thermophile).